A 1864-amino-acid chain; its full sequence is RNA1 polyprotein (1864 aa).

Positions 457-622 (LERLHRNAAV…VEYQSDDFTA (166 aa)) constitute an SF3 helicase domain. 483–490 (GNSRCGKS) provides a ligand contact to ATP. A helical membrane pass occupies residues 892–912 (AGNGAGLVGAAVNSFSVVSTA). Position 916 is an O-(5'-phospho-RNA)-serine (Ser916). Residues 943-1146 (QMSLDQSTVS…MASLLPPLLP (204 aa)) form the Peptidase C3 domain. Catalysis depends on for picornain 3C-like protease activity residues His983, Glu1019, and Cys1109. Positions 1426–1556 (NDILCCDYSS…SVNAVVKPYF (131 aa)) constitute a RdRp catalytic domain.

In terms of processing, specific enzymatic cleavages by picornain 3C-like protease in vivo yield mature proteins. Picornain 3C-like protease is autocatalytically processed. Uridylylated by the polymerase and is covalently linked to the 5'-end of genomic RNA. This uridylylated form acts as a nucleotide-peptide primer for the polymerase.

It localises to the host membrane. Its subcellular location is the host cytoplasm. The protein localises to the host perinuclear region. The protein resides in the host endoplasmic reticulum. The enzyme catalyses RNA(n) + a ribonucleoside 5'-triphosphate = RNA(n+1) + diphosphate. Functionally, thiol protease that cleaves the RNA1 and RNA2 polyproteins. In terms of biological role, plays a role in RNA replication. It is covalently linked to the 5'terminus of both viral single-stranded RNA1 and RNA2 molecules. Down-regulates the RNA1 polyprotein processing and enhances trans-cleavage of RNA2 polyproteins. The protease cofactor and the putative helicase seem to target the replication complexes to ER membranes. Their physical association causes the membrane rearrangement of host ER that may result in formation of the small membranous vesicles that are the site of viral RNA synthesis. Its function is as follows. The protease cofactor and the putative helicase seem to target the replication complexes to ER membranes. Their physical association causes the membrane rearrangement of host ER that may result in formation of the small membranous vesicles that are the site of viral RNA synthesis. Functionally, replicates the viral genome. The polypeptide is RNA1 polyprotein (Trifolium pratense (Red clover)).